The chain runs to 66 residues: Conotoxin mr5.2 (66 aa).

The first 19 residues, 1-19, serve as a signal peptide directing secretion; the sequence is MRCVPVFVILLLLIASAPT. A propeptide spanning residues 20 to 48 is cleaved from the precursor; it reads VDAQLKTKDDMPLASFHANVKRTLQILRD. 4-carboxyglutamate occurs at positions 57 and 61. Asparagine amide is present on asparagine 65.

Contains 2 disulfide bonds that can be either 'C1-C3, C2-C4' or 'C1-C4, C2-C3', since these disulfide connectivities have been observed for conotoxins with cysteine framework V (for examples, see AC P0DQQ7 and AC P81755). Expressed by the venom duct.

The protein resides in the secreted. The sequence is that of Conotoxin mr5.2 from Conus marmoreus (Marble cone).